We begin with the raw amino-acid sequence, 324 residues long: 2-dehydro-3-deoxygluconokinase (324 aa).

Residues 35–39, 106–108, and Arg-170 each bind substrate; these read GAESN and YYR. ATP is bound by residues 168-170, 228-233, and 258-261; these read NVR, KLGKEG, and GAGD. The substrate site is built by Asp-261 and Asp-297. Catalysis depends on Asp-261, which acts as the Proton acceptor.

The protein belongs to the carbohydrate kinase PfkB family.

It catalyses the reaction 2-dehydro-3-deoxy-D-gluconate + ATP = 2-dehydro-3-deoxy-6-phospho-D-gluconate + ADP + H(+). The protein operates within carbohydrate acid metabolism; 2-dehydro-3-deoxy-D-gluconate degradation; D-glyceraldehyde 3-phosphate and pyruvate from 2-dehydro-3-deoxy-D-gluconate: step 1/2. Its function is as follows. Catalyzes the phosphorylation of 2-keto-3-deoxygluconate (KDG) to produce 2-keto-3-deoxy-6-phosphogluconate (KDPG). This is 2-dehydro-3-deoxygluconokinase (kdgK) from Bacillus subtilis (strain 168).